A 171-amino-acid polypeptide reads, in one-letter code: Dual specificity protein phosphatase OPG106 (171 aa).

A Tyrosine-protein phosphatase domain is found at 23-171 (SPTIMTRVTN…IIEKYVIDKN (149 aa)). Cys-110 (phosphocysteine intermediate) is an active-site residue.

It belongs to the protein-tyrosine phosphatase family. Non-receptor class dual specificity subfamily. In terms of assembly, homodimer.

The protein resides in the virion. Its subcellular location is the host cytoplasm. It catalyses the reaction O-phospho-L-tyrosyl-[protein] + H2O = L-tyrosyl-[protein] + phosphate. It carries out the reaction O-phospho-L-seryl-[protein] + H2O = L-seryl-[protein] + phosphate. In terms of biological role, serine/tyrosine phosphatase which down-regulates cellular antiviral response by dephosphorylating activated host STAT1 and blocking interferon (IFN)-stimulated innate immune responses. Dephosphorylates the OPG144 protein. This is Dual specificity protein phosphatase OPG106 (OPG106) from Homo sapiens (Human).